We begin with the raw amino-acid sequence, 156 residues long: dCTP deaminase (156 aa).

DCTP contacts are provided by residues 79–84 (RSTFAR), D95, Q124, and Y138.

It belongs to the dCTP deaminase family. In terms of assembly, homotrimer.

The enzyme catalyses dCTP + H2O + H(+) = dUTP + NH4(+). Its pathway is pyrimidine metabolism; dUMP biosynthesis; dUMP from dCTP (dUTP route): step 1/2. Functionally, catalyzes the deamination of dCTP to dUTP. This chain is dCTP deaminase, found in Thermococcus sibiricus (strain DSM 12597 / MM 739).